Here is a 282-residue protein sequence, read N- to C-terminus: Methyltransferase tpcH (282 aa).

It belongs to the class I-like SAM-binding methyltransferase superfamily. In terms of tissue distribution, specifically expressed in conidia.

It functions in the pathway secondary metabolite biosynthesis. Methyltransferase; part of the gene cluster that mediates the biosynthesis of trypacidin, a mycotoxin with antiprotozoal activity and that plays a role in the infection process. The pathway begins with the synthesis of atrochrysone thioester by the polyketide synthase (PKS) tpcC. The atrochrysone carboxyl ACP thioesterase tpcB then breaks the thioester bond and releases the atrochrysone carboxylic acid from tpcC. The decarboxylase tpcK converts atrochrysone carboxylic acid to atrochrysone which is further reduced into emodin anthrone. The next step is performed by the emodin anthrone oxygenase tpcL that catalyzes the oxidation of emodinanthrone to emodin. Emodin O-methyltransferase encoded by tpcA catalyzes methylation of the 8-hydroxy group of emodin to form questin. Ring cleavage of questin by questin oxidase tpcI leads to desmethylsulochrin via several intermediates including questin epoxide. Another methylation step catalyzed by tpcM leads to the formation of sulochrin which is further converted to monomethylsulfochrin by tpcH. Finally, the tpcJ catalyzes the conversion of monomethylsulfochrin to trypacidin. Trypacidin is toxic for human pulmonary and bronchial epithelial cells by initiating the intracellular formation of nitric oxide (NO) and hydrogen peroxide (H(2)O(2)), thus triggering host necrotic cell death. The trypacidin pathway is also able to produce endocrocin via a distinct route from the endocrocin Enc pathway. This Aspergillus fumigatus (strain ATCC MYA-4609 / CBS 101355 / FGSC A1100 / Af293) (Neosartorya fumigata) protein is Methyltransferase tpcH.